The following is a 315-amino-acid chain: Homoserine O-succinyltransferase (315 aa).

The active-site Acyl-thioester intermediate is cysteine 142. The substrate site is built by lysine 163 and serine 192. Histidine 235 (proton acceptor) is an active-site residue. The active site involves glutamate 237. A substrate-binding site is contributed by arginine 249. Residues 249–258 (RDCEKSDNAP) show a composition bias toward basic and acidic residues. Residues 249–271 (RDCEKSDNAPKPENYFPDDDATK) are disordered.

It belongs to the MetA family.

It localises to the cytoplasm. The catalysed reaction is L-homoserine + succinyl-CoA = O-succinyl-L-homoserine + CoA. It functions in the pathway amino-acid biosynthesis; L-methionine biosynthesis via de novo pathway; O-succinyl-L-homoserine from L-homoserine: step 1/1. Functionally, transfers a succinyl group from succinyl-CoA to L-homoserine, forming succinyl-L-homoserine. The sequence is that of Homoserine O-succinyltransferase from Pseudoalteromonas translucida (strain TAC 125).